Reading from the N-terminus, the 448-residue chain is MYVEKILQSLQKKYPYQKEFHQAVYEAITSLKPLLDSDKSYEKHAILERLIEPEREIFFRVCWLDDNNQIQVNRGCRVEFNSAIGPYKGGLRFHPSVNESVIKFLGFEQVLKNSLTTLAMGGAKGGSDFDPKGKSEHEIMRFCQAFMNELYRHIGATTDVPAGDIGVGEREIGYLFGQYKKLVNRFEGVLTGKGLTYGGSLCRKEATGYGCVYFAEEMLQERNSSLEGKVCSVSGSGNVAIYTIEKLLQIGAKPVTASDSNGMIYDKDGIDLELLKEIKEVRRGRIKEYALEKKSAEYTPTENYPKGGNAVWHVPCFAAFPSATENELSVLDAKTLLSNGCKCVAEGANMPSSNEAIGLFLQAKISYGIGKAANAGGVSVSGLEMAQNASMHPWSFEVVDAKLHHIMKEIYKNVSQTAKEFKDPTNFVLGANIAGFRKVASAMIAQGV.

Lysine 88, glutamine 109, and lysine 112 together coordinate substrate. Residue lysine 124 is the Proton donor of the active site. Glycine 163 contacts substrate. Threonine 207 and asparagine 238 together coordinate NADP(+). Serine 381 is a substrate binding site.

It belongs to the Glu/Leu/Phe/Val dehydrogenases family. As to quaternary structure, homohexamer.

The catalysed reaction is L-glutamate + NADP(+) + H2O = 2-oxoglutarate + NH4(+) + NADPH + H(+). Functionally, catalyzes the reversible oxidative deamination of glutamate to alpha-ketoglutarate and ammonia. In Helicobacter pylori (strain ATCC 700392 / 26695) (Campylobacter pylori), this protein is NADP-specific glutamate dehydrogenase (gdhA).